Consider the following 314-residue polypeptide: Cathepsin L 2 (314 aa).

A signal peptide spans 1–24; sequence MMLLGASLYLNNTQEVSDEIDTAN. A propeptide spans 25–109 (activation peptide); it reads LYANWKMKYN…NASNANFQYK (85 aa). Cystine bridges form between cysteine 132-cysteine 175, cysteine 166-cysteine 207, and cysteine 259-cysteine 302. Cysteine 135 is a catalytic residue. Residues histidine 265 and asparagine 282 contribute to the active site.

Belongs to the peptidase C1 family.

It is found in the secreted. It carries out the reaction Specificity close to that of papain. As compared to cathepsin B, cathepsin L exhibits higher activity toward protein substrates, but has little activity on Z-Arg-Arg-NHMec, and no peptidyl-dipeptidase activity.. May be involved in extracellular digestion. This Paramecium tetraurelia protein is Cathepsin L 2.